Consider the following 44-residue polypeptide: Protein PsbN (44 aa).

Residues 6–26 (FFFTIFLWCLLLSVTGYSVYV) form a helical membrane-spanning segment.

The protein belongs to the PsbN family.

The protein resides in the plastid. It localises to the chloroplast thylakoid membrane. Functionally, may play a role in photosystem I and II biogenesis. The polypeptide is Protein PsbN (Oltmannsiellopsis viridis (Marine flagellate)).